The primary structure comprises 988 residues: MVVTTEAVTSRSERDAEPVQEPLVEKLATEELNILVAVRCRGRNEREIKAKSSVVVDVPDNGVTNEVSINTTDDVGIAAKMNSKTYTVDKVFGPSASQKLVYEEIAEPLFQDFIKGYNCTILVYGMTSTGKTYTMTGDEKLHNGELGDAAGIIPRVLFELFDTLEANKDDYLVKCSFVELYNEELKDLLDSTNTATNSDNKKLRIFDSNVNGTSASGSSSRSSSRNNSPRSAPDNSRAQMLRRKLGRHNTTGNSKISNNNHNKFSRFKQTSQESTRAHASNNHQNVHIPNNNSNNTNQQQSPIDQSASIYIQNLEEFHITSAMEGLQLLQKGLKQRQVASTKMNDFSSRSHSIFTITLYKEQNGELFRVSKMNLVDLAGSENISRSGAMNQRAKEAGSINQSLLTLGRVINSLADKSEHIPFRESKLTRLLQDSLGGNTKTALIATISPAKMTSEETCSTLEYASKAKNIKNKPQLGAFIMKDILVRSITSELAKIKSDLLSTKSKEGVYMSHEHYKDLHYDIECYKTELEESKRAIESLTAQNAMLQQERLSLKDDNACYKANIASLKDNVVTLQSSLKEQITKETNIRSLLKDVQGANEEMKKTIHLFEFKQQELQQSISTFISDEISNIRDTLKKHIEYLQNNGDLKDTEISGNLMRLEKEVVKVIKAAEEEASKSYGECVKMMLKETPRLFESVSGRLDNISKLAEENHSKIAETLSDVSEEYNNLKQYLTNNFFKNNHEELLSHHVQNTYAQLEENSAQLMQNFTMMLDKHIQENKRHMLENILGVTDEVINNELQMFGEQRAKWEKSSALINQCDSVNHSFHQALGSNLVEIRDVVSSSRDNIGATISSIQSRTRNRQSIEEMIQGNDVIRQQITRIKQKNKSLSLFKEHSTETATTSIGSVNKVEGNLKVIMDKVLNDPQLSRGKAEVPDEELHRLEKIPLGITNKENVVDLQHRYPALQEKRKPEDEVLLQAKLQRRNPD.

Residues asparagine 33–isoleucine 470 form the Kinesin motor domain. Glycine 125–threonine 132 is an ATP binding site. Residues phenylalanine 206–serine 301 are disordered. A compositionally biased stretch (low complexity) spans serine 208–arginine 237. Polar residues predominate over residues histidine 248–serine 280. The span at asparagine 281–serine 301 shows a compositional bias: low complexity. Coiled-coil stretches lie at residues glutamate 514–glutamine 619 and lysine 707–phenylalanine 769. A compositionally biased stretch (basic and acidic residues) spans alanine 965 to aspartate 974. Residues alanine 965–aspartate 988 are disordered.

The protein belongs to the TRAFAC class myosin-kinesin ATPase superfamily. Kinesin family. BimC subfamily.

The protein localises to the cytoplasm. Its subcellular location is the cytoskeleton. It is found in the spindle. In terms of biological role, elongates the mitotic spindle by interacting with spindle microtubules to generate an outward force pushing spindle poles apart. Following spindle assembly, CIN8 and KIP1 apparently act to oppose a force, possibly generated by KAR3, that draws separated poles back together. This is Kinesin-like protein CIN8 (CIN8) from Candida glabrata (strain ATCC 2001 / BCRC 20586 / JCM 3761 / NBRC 0622 / NRRL Y-65 / CBS 138) (Yeast).